A 448-amino-acid polypeptide reads, in one-letter code: MGENVVVSNMERETGKPVAVVAVVTEPRFTQRYREYLERQKLFDTQHRVEKMPDGWVALPVLGETLPEQHLQELRNRVAPGSACMLTRLPDPVPSKRAQGCSPAQKLCLEVSRWVEGRGVKWSAELEADLPRSWQRHGNLLLLSEDCFQANQWKNLGPELWETVASALGVQRLAKRGRVSPDGTRTPAVTLLLGDHGWVEHVDNGILYKFDVTQCMFSFGNITEKLRVASLSCAGEVLVDLYAGIGYFTLPFLVHAGAAFVHACEWNPHAVVALRNNLEINGVADRCQIHFGDNRKLKLSNIADRVILGLIPSSEEGWPIACQVLRQDAGGILHIHQNVESFPGKNLQPLEVSKTEKEHWLYPQQITTNQWKNGATRDTRGKMLSPATKPEWQRWAESAETRIATLLQQVHGKPWKTQILHIQPVKSYAPHVDHIVLDLECCPCPSVG.

S-adenosyl-L-methionine is bound by residues serine 218, lysine 225, glutamate 265, and 293 to 294 (DN).

Belongs to the class I-like SAM-binding methyltransferase superfamily. TRM5/TYW2 family.

It catalyses the reaction 4-demethylwyosine(37) in tRNA(Phe) + S-adenosyl-L-methionine = 4-demethyl-7-[(3S)-3-amino-3-carboxypropyl]wyosine(37) in tRNA(Phe) + S-methyl-5'-thioadenosine + H(+). It participates in tRNA modification; wybutosine-tRNA(Phe) biosynthesis. Functionally, S-adenosyl-L-methionine-dependent transferase that acts as a component of the wybutosine biosynthesis pathway. Wybutosine is a hyper modified guanosine with a tricyclic base found at the 3'-position adjacent to the anticodon of eukaryotic phenylalanine tRNA. Catalyzes the transfer of the alpha-amino-alpha-carboxypropyl (acp) group from S-adenosyl-L-methionine to the C-7 position of 4-demethylwyosine (imG-14) to produce wybutosine-86. The chain is tRNA wybutosine-synthesizing protein 2 homolog (TRMT12) from Macaca fascicularis (Crab-eating macaque).